The chain runs to 463 residues: D(2)-like dopamine receptor (463 aa).

The Extracellular portion of the chain corresponds to 1–35; that stretch reads MDVFTQYAYNDSIFDNGTWSANETTKDETHPYNYY. N-linked (GlcNAc...) asparagine glycans are attached at residues Asn10, Asn16, and Asn22. Residues 36–58 form a helical membrane-spanning segment; sequence AMLLTLLIFVIVFGNVLVCMAVS. Over 59 to 68 the chain is Cytoplasmic; that stretch reads REKALQTTTN. The chain crosses the membrane as a helical span at residues 69 to 91; sequence YLIVSLAVADLLVATLVMPWVVY. The Extracellular segment spans residues 92-106; the sequence is LEVVGEWRFSKIHCD. A disulfide bridge connects residues Cys105 and Cys183. Residues 107-128 form a helical membrane-spanning segment; the sequence is IFVTLDVMMCTASILNLCAISI. Topologically, residues 129–149 are cytoplasmic; sequence DRYTAVAMPMLYNTRYSSRRR. A helical transmembrane segment spans residues 150–170; the sequence is VTVMISVVWVLSFAISCPLLF. Over 171 to 189 the chain is Extracellular; it reads GLNNTATRDQSLCFIANPA. Residues 190-214 traverse the membrane as a helical segment; that stretch reads FVVYSSIVSFYVPFIVTLLVYVQIY. Residues 215–392 lie on the Cytoplasmic side of the membrane; it reads VVLRKRRKRV…SQQKEKKATQ (178 aa). The disordered stretch occupies residues 295–362; that stretch reads CGGSHKQPPP…KEAQGNPAPV (68 aa). Residues 315 to 329 show a composition bias toward polar residues; it reads PATSHQLLMSTKANA. Basic and acidic residues predominate over residues 341-353; sequence EGQRTEKNGDPTK. Residues 393-414 form a helical membrane-spanning segment; the sequence is MLAIVLGVFIICWLPFFITHIL. Residues 415–429 are Extracellular-facing; it reads NTHCTRCKVPAEMYN. Cys418 and Cys421 are joined by a disulfide. The chain crosses the membrane as a helical span at residues 430-451; that stretch reads AFTWLGYVNSAVNPIIYTTFNV. At 452–463 the chain is on the cytoplasmic side; sequence EFRKAFIKILHC.

It belongs to the G-protein coupled receptor 1 family.

It localises to the cell membrane. Functionally, receptor for dopamine. This Takifugu rubripes (Japanese pufferfish) protein is D(2)-like dopamine receptor (d215).